Here is a 165-residue protein sequence, read N- to C-terminus: Putative 4-hydroxy-4-methyl-2-oxoglutarate aldolase (165 aa).

Residues 80-83 and Arg-102 contribute to the substrate site; that span reads GGNL. Residue Asp-103 coordinates a divalent metal cation.

It belongs to the class II aldolase/RraA-like family. In terms of assembly, homotrimer. A divalent metal cation is required as a cofactor.

The enzyme catalyses 4-hydroxy-4-methyl-2-oxoglutarate = 2 pyruvate. It catalyses the reaction oxaloacetate + H(+) = pyruvate + CO2. Its function is as follows. Catalyzes the aldol cleavage of 4-hydroxy-4-methyl-2-oxoglutarate (HMG) into 2 molecules of pyruvate. Also contains a secondary oxaloacetate (OAA) decarboxylase activity due to the common pyruvate enolate transition state formed following C-C bond cleavage in the retro-aldol and decarboxylation reactions. The sequence is that of Putative 4-hydroxy-4-methyl-2-oxoglutarate aldolase from Burkholderia mallei (strain NCTC 10247).